A 333-amino-acid polypeptide reads, in one-letter code: NADH-ubiquinone oxidoreductase chain 2 (333 aa).

A run of 10 helical transmembrane segments spans residues 10-30 (WFIY…NIFI), 57-77 (LIYY…IIVY), 91-111 (FMVQ…FWMI), 121-141 (QIFL…VSMT), 143-163 (INSW…FYAN), 170-190 (KLLA…LELN), 192-212 (NMFI…ISFL), 242-262 (MYPI…MVSV), 267-287 (WILF…IIIL), and 313-333 (SYFA…LNFL).

It belongs to the complex I subunit 2 family.

It localises to the mitochondrion inner membrane. The enzyme catalyses a ubiquinone + NADH + 5 H(+)(in) = a ubiquinol + NAD(+) + 4 H(+)(out). Core subunit of the mitochondrial membrane respiratory chain NADH dehydrogenase (Complex I) that is believed to belong to the minimal assembly required for catalysis. Complex I functions in the transfer of electrons from NADH to the respiratory chain. The immediate electron acceptor for the enzyme is believed to be ubiquinone. In Apis mellifera ligustica (Common honeybee), this protein is NADH-ubiquinone oxidoreductase chain 2 (ND2).